The chain runs to 625 residues: Tyrosine-protein kinase ITK/TSK (625 aa).

Residues 4–117 (FILLEEQLIK…WVLTLKEETR (114 aa)) enclose the PH domain. A Btk-type zinc finger spans residues 119–155 (NNSLVSKYHPNFWMDGRWRCCSQLEKPAVGCAPYDPS). 4 residues coordinate Zn(2+): His127, Cys138, Cys139, and Cys149. Residues 153 to 174 (DPSKNASKKPLPPTPEDNRRSF) are disordered. An SH3 domain is found at 177-237 (PEETLVIALY…PSSYLVEKSP (61 aa)). Tyr186 is subject to Phosphotyrosine; by autocatalysis. The 99-residue stretch at 245–343 (WYNKSISRDK…GLVTRLRYPV (99 aa)) folds into the SH2 domain. The region spanning 368–620 (LTFVQEIGSG…SQLLSQLAEI (253 aa)) is the Protein kinase domain. Residues 374–382 (IGSGQFGLV) and Lys396 each bind ATP. The active-site Proton acceptor is the Asp487. Tyr517 carries the phosphotyrosine; by LCK modification. Ser570 carries the post-translational modification Phosphoserine.

Belongs to the protein kinase superfamily. Tyr protein kinase family. TEC subfamily. As to quaternary structure, homooligomerizes; this association negatively regulates kinase activity. Interacts with PPIA/CYPA; this interaction regulates TCR signal strength via a proline-directed conformational switch in ITK. Interacts with THEMIS. Interacts with FASLG. Interacts with VAV1; this interaction is important for VAV1 localization and TCR-induced actin polarization. Interacts with TBX21. Zn(2+) is required as a cofactor. Phosphorylated at Tyr-517 in the activation loop of the kinase domain by LCK. Subsequent autophosphorylation at Tyr-186 leads to the kinase activation. The autophosphorylated Tyr-186 lies within the substrate binding sequence of the SH3 domain. In terms of processing, ubiquitinated. Is detected in the thymus, lymph node and very faintly in the spleen, but is not detected in the liver, lung, kidney, heart, brain, intestine or testis. Expressed in T-lymphocytes and mast cells. It may also be expressed in natural killer cells.

Its subcellular location is the cytoplasm. The protein resides in the nucleus. The catalysed reaction is L-tyrosyl-[protein] + ATP = O-phospho-L-tyrosyl-[protein] + ADP + H(+). Its function is as follows. Tyrosine kinase that plays an essential role in regulation of the adaptive immune response. Regulates the development, function and differentiation of conventional T-cells and nonconventional NKT-cells. When antigen presenting cells (APC) activate T-cell receptor (TCR), a series of phosphorylation lead to the recruitment of ITK to the cell membrane, in the vicinity of the stimulated TCR receptor, where it is phosphorylated by LCK. Phosphorylation leads to ITK autophosphorylation and full activation. Once activated, phosphorylates PLCG1, leading to the activation of this lipase and subsequent cleavage of its substrates. In turn, the endoplasmic reticulum releases calcium in the cytoplasm and the nuclear activator of activated T-cells (NFAT) translocates into the nucleus to perform its transcriptional duty. Phosphorylates 2 essential adapter proteins: the linker for activation of T-cells/LAT protein and LCP2. Then, a large number of signaling molecules such as VAV1 are recruited and ultimately lead to lymphokine production, T-cell proliferation and differentiation. Required for TCR-mediated calcium response in gamma-delta T-cells, may also be involved in the modulation of the transcriptomic signature in the Vgamma2-positive subset of immature gamma-delta T-cells. Phosphorylates TBX21 at 'Tyr-525' and mediates its interaction with GATA3. This Mus musculus (Mouse) protein is Tyrosine-protein kinase ITK/TSK (Itk).